The following is a 92-amino-acid chain: Small ribosomal subunit protein uS19c (92 aa).

Belongs to the universal ribosomal protein uS19 family.

Its subcellular location is the plastid. The protein resides in the chloroplast. Its function is as follows. Protein S19 forms a complex with S13 that binds strongly to the 16S ribosomal RNA. This Ostreococcus tauri protein is Small ribosomal subunit protein uS19c.